The chain runs to 338 residues: DNA-directed RNA polymerase subunit alpha (338 aa).

An alpha N-terminal domain (alpha-NTD) region spans residues 1–234 (MIERNWNELI…DQLQIFITFE (234 aa)). Residues 250-338 (FNPALLKKVD…DLAKKFEDQI (89 aa)) are alpha C-terminal domain (alpha-CTD).

Belongs to the RNA polymerase alpha chain family. As to quaternary structure, homodimer. The RNAP catalytic core consists of 2 alpha, 1 beta, 1 beta' and 1 omega subunit. When a sigma factor is associated with the core the holoenzyme is formed, which can initiate transcription.

The enzyme catalyses RNA(n) + a ribonucleoside 5'-triphosphate = RNA(n+1) + diphosphate. Functionally, DNA-dependent RNA polymerase catalyzes the transcription of DNA into RNA using the four ribonucleoside triphosphates as substrates. This chain is DNA-directed RNA polymerase subunit alpha, found in Caulobacter vibrioides (strain ATCC 19089 / CIP 103742 / CB 15) (Caulobacter crescentus).